A 541-amino-acid polypeptide reads, in one-letter code: Chaperonin GroEL 2 (541 aa).

ATP contacts are provided by residues 30 to 33 (TLGP), lysine 51, 87 to 91 (DGTTT), glycine 414, and aspartate 495.

It belongs to the chaperonin (HSP60) family. Forms a cylinder of 14 subunits composed of two heptameric rings stacked back-to-back. Interacts with the co-chaperonin GroES.

It is found in the cytoplasm. It carries out the reaction ATP + H2O + a folded polypeptide = ADP + phosphate + an unfolded polypeptide.. Functionally, together with its co-chaperonin GroES, plays an essential role in assisting protein folding. The GroEL-GroES system forms a nano-cage that allows encapsulation of the non-native substrate proteins and provides a physical environment optimized to promote and accelerate protein folding. This is Chaperonin GroEL 2 from Cereibacter sphaeroides (Rhodobacter sphaeroides).